The primary structure comprises 344 residues: Dihydroorotase (344 aa).

The Zn(2+) site is built by His14 and His16. Residues 16-18 (HVR) and Asn42 contribute to the substrate site. Zn(2+)-binding residues include Lys99, His136, and His174. Position 99 is an N6-carboxylysine (Lys99). A substrate-binding site is contributed by His136. Position 219 (Leu219) interacts with substrate. Asp247 provides a ligand contact to Zn(2+). The active site involves Asp247. 2 residues coordinate substrate: His251 and Ala263.

This sequence belongs to the metallo-dependent hydrolases superfamily. DHOase family. Class II DHOase subfamily. As to quaternary structure, homodimer. It depends on Zn(2+) as a cofactor.

The enzyme catalyses (S)-dihydroorotate + H2O = N-carbamoyl-L-aspartate + H(+). It functions in the pathway pyrimidine metabolism; UMP biosynthesis via de novo pathway; (S)-dihydroorotate from bicarbonate: step 3/3. Functionally, catalyzes the reversible cyclization of carbamoyl aspartate to dihydroorotate. The polypeptide is Dihydroorotase (Leptothrix cholodnii (strain ATCC 51168 / LMG 8142 / SP-6) (Leptothrix discophora (strain SP-6))).